The primary structure comprises 203 residues: Outer-membrane lipoprotein carrier protein (203 aa).

The first 21 residues, 1 to 21 (MKKLAITCALLSGMVVSQVWA), serve as a signal peptide directing secretion. Positions 184–203 (DASKFTFTPPKGVTVDDQRK) are disordered.

Belongs to the LolA family. As to quaternary structure, monomer.

The protein resides in the periplasm. Participates in the translocation of lipoproteins from the inner membrane to the outer membrane. Only forms a complex with a lipoprotein if the residue after the N-terminal Cys is not an aspartate (The Asp acts as a targeting signal to indicate that the lipoprotein should stay in the inner membrane). This chain is Outer-membrane lipoprotein carrier protein, found in Klebsiella pneumoniae (strain 342).